Consider the following 199-residue polypeptide: ATP-dependent Clp protease proteolytic subunit 2 (199 aa).

Catalysis depends on Ser-98, which acts as the Nucleophile. The active site involves His-123.

The protein belongs to the peptidase S14 family. As to quaternary structure, fourteen ClpP subunits assemble into 2 heptameric rings which stack back to back to give a disk-like structure with a central cavity, resembling the structure of eukaryotic proteasomes.

It is found in the cytoplasm. The enzyme catalyses Hydrolysis of proteins to small peptides in the presence of ATP and magnesium. alpha-casein is the usual test substrate. In the absence of ATP, only oligopeptides shorter than five residues are hydrolyzed (such as succinyl-Leu-Tyr-|-NHMec, and Leu-Tyr-Leu-|-Tyr-Trp, in which cleavage of the -Tyr-|-Leu- and -Tyr-|-Trp bonds also occurs).. Its function is as follows. Cleaves peptides in various proteins in a process that requires ATP hydrolysis. Has a chymotrypsin-like activity. Plays a major role in the degradation of misfolded proteins. This Treponema pallidum (strain Nichols) protein is ATP-dependent Clp protease proteolytic subunit 2.